The sequence spans 410 residues: F-box protein At3g19890 (410 aa).

The F-box domain occupies 2–49 (TMISDLSKDLVEEILSKAPITSLGAVRSTHKQWNALSKGRLLYKAEAK). The tract at residues 386–410 (EDKCKSIKMVDTKRQRKKRKRKSKR) is disordered. Over residues 387-398 (DKCKSIKMVDTK) the composition is skewed to basic and acidic residues. Residues 399–410 (RQRKKRKRKSKR) are compositionally biased toward basic residues.

The sequence is that of F-box protein At3g19890 from Arabidopsis thaliana (Mouse-ear cress).